The following is a 282-amino-acid chain: U1 small nuclear ribonucleoprotein A (282 aa).

RRM domains follow at residues 10 to 89 (NTIY…YSKT) and 208 to 282 (HILF…FAKK).

This sequence belongs to the RRM U1 A/B'' family. In terms of assembly, U1 snRNP is composed of the 7 core Sm proteins snrpb, snrpd1, snrpd2, snrpd3, snrpe, snrpf and snrpg that assemble in a heptameric protein ring on the Sm site of the small nuclear RNA to form the core snRNP, and at least three U1 snRNP-specific proteins snrnp70/U1-70K, snrpa/U1-A and snrpc/U1-C.

The protein resides in the nucleus. Its function is as follows. Component of the spliceosomal U1 snRNP, which is essential for recognition of the pre-mRNA 5' splice-site and the subsequent assembly of the spliceosome. U1 snRNP is the first snRNP to interact with pre-mRNA. This interaction is required for the subsequent binding of U2 snRNP and the U4/U6/U5 tri-snRNP. Snrpa binds stem loop II of U1 snRNA. This is U1 small nuclear ribonucleoprotein A (snrpa) from Xenopus laevis (African clawed frog).